The following is a 1373-amino-acid chain: DNA-directed RNA polymerase subunit beta (1373 aa).

Belongs to the RNA polymerase beta chain family. As to quaternary structure, the RNAP catalytic core consists of 2 alpha, 1 beta, 1 beta' and 1 omega subunit. When a sigma factor is associated with the core the holoenzyme is formed, which can initiate transcription.

It carries out the reaction RNA(n) + a ribonucleoside 5'-triphosphate = RNA(n+1) + diphosphate. DNA-dependent RNA polymerase catalyzes the transcription of DNA into RNA using the four ribonucleoside triphosphates as substrates. In Rickettsia peacockii (strain Rustic), this protein is DNA-directed RNA polymerase subunit beta.